We begin with the raw amino-acid sequence, 381 residues long: Guanine nucleotide-binding protein G(s) subunit alpha (381 aa).

Residue C3 is the site of S-palmitoyl cysteine attachment. Residues 36 to 381 (ALHRLLLLGA…RMHLQKYELL (346 aa)) form the G-alpha domain. The segment at 39–52 (RLLLLGAGESGKST) is G1 motif. Residues 44–51 (GAGESGKS), 183–189 (LRCRVLT), 208–212 (GVGGQ), 277–280 (NKQD), and A353 each bind GTP. 2 residues coordinate Mg(2+): S51 and T189. A G2 motif region spans residues 181–189 (DILRCRVLT). Residues 204–213 (FYMFGVGGQR) form a G3 motif region. The tract at residues 273-280 (ILFLNKQD) is G4 motif. The tract at residues 351–356 (TTAVDT) is G5 motif.

This sequence belongs to the G-alpha family. G(s) subfamily. In terms of assembly, g proteins are composed of 3 units; alpha, beta and gamma. The alpha chain contains the guanine nucleotide binding site.

Its function is as follows. Guanine nucleotide-binding proteins (G proteins) are involved as modulators or transducers in various transmembrane signaling systems. The G(s) protein is involved in hormonal regulation of adenylate cyclase: it activates the cyclase in response to beta-adrenergic stimuli. This chain is Guanine nucleotide-binding protein G(s) subunit alpha, found in Geodia cydonium (Sponge).